Reading from the N-terminus, the 449-residue chain is Tubulin beta chain (449 aa).

Gln-11, Glu-71, Ser-140, Gly-144, Thr-145, Gly-146, Asn-206, and Asn-228 together coordinate GTP. Glu-71 provides a ligand contact to Mg(2+).

It belongs to the tubulin family. As to quaternary structure, dimer of alpha and beta chains. A typical microtubule is a hollow water-filled tube with an outer diameter of 25 nm and an inner diameter of 15 nM. Alpha-beta heterodimers associate head-to-tail to form protofilaments running lengthwise along the microtubule wall with the beta-tubulin subunit facing the microtubule plus end conferring a structural polarity. Microtubules usually have 13 protofilaments but different protofilament numbers can be found in some organisms and specialized cells. Requires Mg(2+) as cofactor.

It localises to the cytoplasm. The protein resides in the cytoskeleton. Its function is as follows. Tubulin is the major constituent of microtubules, a cylinder consisting of laterally associated linear protofilaments composed of alpha- and beta-tubulin heterodimers. Microtubules grow by the addition of GTP-tubulin dimers to the microtubule end, where a stabilizing cap forms. Below the cap, tubulin dimers are in GDP-bound state, owing to GTPase activity of alpha-tubulin. This is Tubulin beta chain (TUBB) from Cicer arietinum (Chickpea).